Consider the following 308-residue polypeptide: Ribosomal RNA small subunit methyltransferase H (308 aa).

S-adenosyl-L-methionine is bound by residues 36–38, D55, F86, D103, and Q110; that span reads GGH.

The protein belongs to the methyltransferase superfamily. RsmH family.

It localises to the cytoplasm. The catalysed reaction is cytidine(1402) in 16S rRNA + S-adenosyl-L-methionine = N(4)-methylcytidine(1402) in 16S rRNA + S-adenosyl-L-homocysteine + H(+). Specifically methylates the N4 position of cytidine in position 1402 (C1402) of 16S rRNA. In Helicobacter pylori (strain HPAG1), this protein is Ribosomal RNA small subunit methyltransferase H.